The primary structure comprises 353 residues: Aliphatic aldoxime dehydratase (353 aa).

Serine 219 lines the an aliphatic aldoxime pocket. Histidine 299 serves as a coordination point for heme b. Histidine 320 contacts an aliphatic aldoxime. Histidine 320 is a catalytic residue.

The protein belongs to the heme-containing dehydratase family. In terms of assembly, homodimer. Requires heme b as cofactor.

It carries out the reaction an aliphatic aldoxime = a nitrile + H2O. Active when the heme iron is in the ferrous state. Activated by FMN, Fe(2+), Sn(2+), Na(2)SO(3), Na(2)S and vitamin K3. Functionally, catalyzes the dehydration of aldoximes to their corresponding nitrile. Is active toward various arylalkyl- and alkyl-aldoximes, and to a lesser extent toward aryl-aldoximes. The sequence is that of Aliphatic aldoxime dehydratase from Rhodococcus globerulus.